Consider the following 122-residue polypeptide: Large ribosomal subunit protein uL14 (122 aa).

The protein belongs to the universal ribosomal protein uL14 family. In terms of assembly, part of the 50S ribosomal subunit. Forms a cluster with proteins L3 and L19. In the 70S ribosome, L14 and L19 interact and together make contacts with the 16S rRNA in bridges B5 and B8.

Functionally, binds to 23S rRNA. Forms part of two intersubunit bridges in the 70S ribosome. The sequence is that of Large ribosomal subunit protein uL14 from Cutibacterium acnes (strain DSM 16379 / KPA171202) (Propionibacterium acnes).